The following is a 443-amino-acid chain: Flavastacin (443 aa).

The signal sequence occupies residues 1 to 15; it reads MTRKLLILSGCLILA. A propeptide spans 16–91 (activation peptide); it reads LNSCKSDMET…ANPDISTVER (76 aa). A Peptidase M12A domain is found at 92-289; it reads STIVSSFIKT…AGINHLYGPV (198 aa). Histidine 189 contacts Zn(2+). Glutamate 190 is an active-site residue. Positions 193 and 199 each coordinate Zn(2+). The Ricin B-type lectin domain occupies 297–440; it reads GTYTLTTSLA…PYTKQRFTLT (144 aa). An O-linked (Man...) serine glycan is attached at serine 355.

Zn(2+) serves as cofactor. Post-translationally, O-linked glycan consists of the Man, GlcNAc, GlcU, Glc, GlcU, Rha, Man heptasaccharide.

The enzyme catalyses Hydrolyzes polypeptides on the amino-side of Asp in -Xaa-|-Asp-. Acts very slowly on -Xaa-|-Glu.. Functionally, zinc metallendopeptidase that cleaves preferentially on N-terminal side of aspartate-containing substrates. This chain is Flavastacin, found in Elizabethkingia meningoseptica (Chryseobacterium meningosepticum).